The following is a 460-amino-acid chain: Cysteine--tRNA ligase (460 aa).

Cys28 serves as a coordination point for Zn(2+). The 'HIGH' region motif lies at 30-40 (VTIYDLCHIGH). Residues Cys209, His234, and Glu238 each coordinate Zn(2+). The 'KMSKS' region motif lies at 266–270 (KMSKS). Residue Lys269 coordinates ATP.

The protein belongs to the class-I aminoacyl-tRNA synthetase family. In terms of assembly, monomer. Requires Zn(2+) as cofactor.

The protein resides in the cytoplasm. The enzyme catalyses tRNA(Cys) + L-cysteine + ATP = L-cysteinyl-tRNA(Cys) + AMP + diphosphate. This Shewanella frigidimarina (strain NCIMB 400) protein is Cysteine--tRNA ligase.